The chain runs to 462 residues: MSAFVVAYFPHLCLAFGGLLVLCLSMARSVPAGFYPATAALFAALPGLWAVAGPQGGSPIACFYAGLLSVIALATIALLARYAERRGFAGDALYGLLLWSALGMLLLADADDWIMLAVGLELASLCLYALIAARLDDNLGTEAALKYFLPGAMALAVLLFGMALIYAASGSMEIAASLAAPGPLTAAGLALVLVGVGFKLSLAPVHLWTPDVYQGAPAPVAAFLSSGSKAAAAAALLHVCSEVSPEARELLWPALAVGAGLTMAVGNLGAVAQASVKRLLAYSSIAQMGYILMAAMAVNDGGGEAALFYLAAFALMDLAAFGAVGALSAQIGDRDDIAAYRGLGYVHPWRAGVLAIGLASLAGLPPTAGFVGKFLVFGAALSAGYVGLAAFGIITAVVGVFYALRLLAALYMRESLIAHPAAVYAAGPAGTLALGVMAAGLVGLGLFPQTLLGAIAALFGGA.

15 consecutive transmembrane segments (helical) span residues 4–24, 32–52, 60–80, 88–108, 113–133, 148–168, 178–198, 220–240, 251–271, 279–299, 307–327, 351–371, 374–394, 416–436, and 439–459; these read FVVA…VLCL, AGFY…WAVA, IACF…ALLA, FAGD…LLLA, WIML…LIAA, FLPG…IYAA, LAAP…GVGF, VAAF…LHVC, LWPA…LGAV, LLAY…MAVN, LFYL…VGAL, AGVL…AGFV, FLVF…FGII, LIAH…ALGV, and AGLV…AALF.

Belongs to the complex I subunit 2 family. In terms of assembly, NDH-1 is composed of 14 different subunits. Subunits NuoA, H, J, K, L, M, N constitute the membrane sector of the complex.

It localises to the cell inner membrane. It carries out the reaction a quinone + NADH + 5 H(+)(in) = a quinol + NAD(+) + 4 H(+)(out). Functionally, NDH-1 shuttles electrons from NADH, via FMN and iron-sulfur (Fe-S) centers, to quinones in the respiratory chain. The immediate electron acceptor for the enzyme in this species is believed to be ubiquinone. Couples the redox reaction to proton translocation (for every two electrons transferred, four hydrogen ions are translocated across the cytoplasmic membrane), and thus conserves the redox energy in a proton gradient. This Solidesulfovibrio magneticus (strain ATCC 700980 / DSM 13731 / RS-1) (Desulfovibrio magneticus) protein is NADH-quinone oxidoreductase subunit N 1.